The sequence spans 734 residues: Photosystem I P700 chlorophyll a apoprotein A2 (734 aa).

The next 8 helical transmembrane spans lie at 46 to 69, 135 to 158, 175 to 199, 273 to 291, 330 to 353, 369 to 395, 417 to 439, and 517 to 535; these read IFAS…FHVA, LYTG…LHLQ, LNHH…HVAI, IAHH…GHMY, IHFQ…QHMY, AALY…IFFI, AIIS…LYVH, and FLVH…LILV. The [4Fe-4S] cluster site is built by cysteine 559 and cysteine 568. 2 consecutive transmembrane segments (helical) span residues 575–596 and 643–665; these read AFYL…YWHW and LSVW…MFLI. Chlorophyll a is bound by residues histidine 654, methionine 662, and tyrosine 670. Tryptophan 671 serves as a coordination point for phylloquinone. A helical membrane pass occupies residues 707 to 727; it reads LVGLAHFSVGYIFTYAAFLIA.

It belongs to the PsaA/PsaB family. The PsaA/B heterodimer binds the P700 chlorophyll special pair and subsequent electron acceptors. PSI consists of a core antenna complex that captures photons, and an electron transfer chain that converts photonic excitation into a charge separation. The eukaryotic PSI reaction center is composed of at least 11 subunits. P700 is a chlorophyll a/chlorophyll a' dimer, A0 is one or more chlorophyll a, A1 is one or both phylloquinones and FX is a shared 4Fe-4S iron-sulfur center. is required as a cofactor.

It is found in the plastid. It localises to the chloroplast thylakoid membrane. It carries out the reaction reduced [plastocyanin] + hnu + oxidized [2Fe-2S]-[ferredoxin] = oxidized [plastocyanin] + reduced [2Fe-2S]-[ferredoxin]. Its function is as follows. PsaA and PsaB bind P700, the primary electron donor of photosystem I (PSI), as well as the electron acceptors A0, A1 and FX. PSI is a plastocyanin-ferredoxin oxidoreductase, converting photonic excitation into a charge separation, which transfers an electron from the donor P700 chlorophyll pair to the spectroscopically characterized acceptors A0, A1, FX, FA and FB in turn. Oxidized P700 is reduced on the lumenal side of the thylakoid membrane by plastocyanin. The polypeptide is Photosystem I P700 chlorophyll a apoprotein A2 (Gossypium hirsutum (Upland cotton)).